A 386-amino-acid polypeptide reads, in one-letter code: DNA-directed RNA polymerase subunit Rpo1C (386 aa).

The protein belongs to the RNA polymerase beta' chain family. As to quaternary structure, part of the RNA polymerase complex.

The protein localises to the cytoplasm. It carries out the reaction RNA(n) + a ribonucleoside 5'-triphosphate = RNA(n+1) + diphosphate. Functionally, DNA-dependent RNA polymerase (RNAP) catalyzes the transcription of DNA into RNA using the four ribonucleoside triphosphates as substrates. Forms part of the jaw domain. The polypeptide is DNA-directed RNA polymerase subunit Rpo1C (Methanococcus maripaludis (strain DSM 14266 / JCM 13030 / NBRC 101832 / S2 / LL)).